A 109-amino-acid polypeptide reads, in one-letter code: Mitochondrial pyruvate carrier 1 (109 aa).

N-acetylalanine is present on A2. The Mitochondrial matrix segment spans residues 2-20 (AGALVRKAADYVRSKDFRD). The helical transmembrane segment at 21–41 (YLMSTHFWGPVANWGLPIAAI) threads the bilayer. The Mitochondrial intermembrane segment spans residues 42–52 (NDMKKSPEIIS). A helical transmembrane segment spans residues 53–71 (GRMTFALCCYSLTFMRFAY). K72 carries the post-translational modification N6-acetyllysine. The Mitochondrial matrix segment spans residues 72 to 109 (KVQPRNWLLFACHATNEVAQLIQGGRLIKHEMTKTASA).

Belongs to the mitochondrial pyruvate carrier (MPC) (TC 2.A.105) family. In terms of assembly, homodimer. Forms heterodimer with MPC2. The heterodimer is the more stable and dominant form.

The protein localises to the mitochondrion inner membrane. The catalysed reaction is pyruvate(out) + H(+)(out) = pyruvate(in) + H(+)(in). Its function is as follows. Mediates the uptake of pyruvate into mitochondria. This chain is Mitochondrial pyruvate carrier 1 (MPC1), found in Homo sapiens (Human).